A 208-amino-acid polypeptide reads, in one-letter code: Holliday junction resolvase RecU (208 aa).

Residues 1–25 (MNYPNGKPFNRNKTKVGRTNDHKSS) are disordered. 4 residues coordinate Mg(2+): T87, D89, E102, and Q121.

It belongs to the RecU family. Requires Mg(2+) as cofactor.

The protein resides in the cytoplasm. It carries out the reaction Endonucleolytic cleavage at a junction such as a reciprocal single-stranded crossover between two homologous DNA duplexes (Holliday junction).. Functionally, endonuclease that resolves Holliday junction intermediates in genetic recombination. Cleaves mobile four-strand junctions by introducing symmetrical nicks in paired strands. Promotes annealing of linear ssDNA with homologous dsDNA. Required for DNA repair, homologous recombination and chromosome segregation. The chain is Holliday junction resolvase RecU from Staphylococcus carnosus (strain TM300).